Reading from the N-terminus, the 145-residue chain is Basic phospholipase A2 Vb-2 (145 aa).

Residues 1–19 (MNPAHLLVLLAVCVSLLGA) form the signal peptide. Positions 20–27 (ANIPPQPL) are excised as a propeptide. Disulfide bonds link cysteine 38/cysteine 97, cysteine 52/cysteine 144, cysteine 54/cysteine 70, cysteine 69/cysteine 125, cysteine 76/cysteine 118, cysteine 86/cysteine 111, and cysteine 104/cysteine 116. The Ca(2+) site is built by tyrosine 53, glycine 55, and glycine 57. Histidine 73 is an active-site residue. Aspartate 74 serves as a coordination point for Ca(2+). Residue aspartate 119 is part of the active site.

It depends on Ca(2+) as a cofactor. In terms of tissue distribution, expressed by the venom gland.

The protein resides in the secreted. The catalysed reaction is a 1,2-diacyl-sn-glycero-3-phosphocholine + H2O = a 1-acyl-sn-glycero-3-phosphocholine + a fatty acid + H(+). Functionally, snake venom phospholipase A2 (PLA2) that has only a weak enzymatic activity. Inhibits neuromuscular transmission by blocking acetylcholine release from the nerve termini. PLA2 catalyzes the calcium-dependent hydrolysis of the 2-acyl groups in 3-sn-phosphoglycerides. The sequence is that of Basic phospholipase A2 Vb-2 from Bungarus fasciatus (Banded krait).